The following is a 160-amino-acid chain: Ribosomal RNA large subunit methyltransferase H (160 aa).

S-adenosyl-L-methionine contacts are provided by residues leucine 76, glycine 108, and 127–132; that span reads LGKMTW.

This sequence belongs to the RNA methyltransferase RlmH family. In terms of assembly, homodimer.

It is found in the cytoplasm. The catalysed reaction is pseudouridine(1915) in 23S rRNA + S-adenosyl-L-methionine = N(3)-methylpseudouridine(1915) in 23S rRNA + S-adenosyl-L-homocysteine + H(+). Its function is as follows. Specifically methylates the pseudouridine at position 1915 (m3Psi1915) in 23S rRNA. This is Ribosomal RNA large subunit methyltransferase H from Rhizobium meliloti (strain 1021) (Ensifer meliloti).